The primary structure comprises 117 residues: Large ribosomal subunit protein uL18 (117 aa).

This sequence belongs to the universal ribosomal protein uL18 family. As to quaternary structure, part of the 50S ribosomal subunit; part of the 5S rRNA/L5/L18/L25 subcomplex. Contacts the 5S and 23S rRNAs.

This is one of the proteins that bind and probably mediate the attachment of the 5S RNA into the large ribosomal subunit, where it forms part of the central protuberance. In Idiomarina loihiensis (strain ATCC BAA-735 / DSM 15497 / L2-TR), this protein is Large ribosomal subunit protein uL18.